The following is a 1114-amino-acid chain: Lysylphosphatidylglycerol biosynthesis bifunctional protein LysX (1114 aa).

Residues 1-11 show a composition bias toward basic and acidic residues; it reads MSASTETHHAS. Residues 1 to 26 form a disordered region; that stretch reads MSASTETHHASEAAVPTAPRPRPGLG. Residues 1-618 form a phosphatidylglycerol lysyltransferase region; it reads MSASTETHHA…GLHSDGSAPG (618 aa). A run of 6 helical transmembrane segments spans residues 38–58, 77–97, 101–121, 126–146, 164–184, and 219–239; these read IAGL…ISPV, APDT…ALAS, IAWW…VIVS, NVNA…LIAA, GVLI…VELF, and FVNT…VITL. The tract at residues 619 to 1114 is lysine--tRNA ligase; sequence EGLAPTATGP…LAFPLAKPRQ (496 aa). The segment at residues 674 to 751 is a DNA-binding region (OB); that stretch reads VRIAGRLLRI…LSLLANEWRM (78 aa). 2 residues coordinate Mg(2+): D1025 and E1032.

This sequence in the N-terminal section; belongs to the LPG synthetase family. It in the C-terminal section; belongs to the class-II aminoacyl-tRNA synthetase family. It depends on Mg(2+) as a cofactor.

The protein localises to the cell membrane. The enzyme catalyses tRNA(Lys) + L-lysine + ATP = L-lysyl-tRNA(Lys) + AMP + diphosphate. It carries out the reaction L-lysyl-tRNA(Lys) + a 1,2-diacyl-sn-glycero-3-phospho-(1'-sn-glycerol) = a 1,2-diacyl-sn-glycero-3-phospho-1'-(3'-O-L-lysyl)-sn-glycerol + tRNA(Lys). Its function is as follows. Catalyzes the production of L-lysyl-tRNA(Lys)transfer and the transfer of a lysyl group from L-lysyl-tRNA(Lys) to membrane-bound phosphatidylglycerol (PG), which produces lysylphosphatidylglycerol (LPG), one of the components of the bacterial membrane with a positive net charge. LPG synthesis contributes to the resistance to cationic antimicrobial peptides (CAMPs) and likely protects M.tuberculosis against the CAMPs produced by competiting microorganisms (bacteriocins). In fact, the modification of anionic phosphatidylglycerol with positively charged L-lysine results in repulsion of the peptides. This chain is Lysylphosphatidylglycerol biosynthesis bifunctional protein LysX (lysX), found in Rhodococcus jostii (strain RHA1).